Here is a 169-residue protein sequence, read N- to C-terminus: Cell division inhibitor SulA (169 aa).

The interval 106-112 (ALRTGNY) is ftsZ binding. The segment at 162–169 (KIHSNLYH) is lon protease binding.

It belongs to the SulA family. Interacts with FtsZ. Is rapidly cleaved and degraded by the Lon protease once DNA damage is repaired.

Functionally, component of the SOS system and an inhibitor of cell division. Accumulation of SulA causes rapid cessation of cell division and the appearance of long, non-septate filaments. In the presence of GTP, binds a polymerization-competent form of FtsZ in a 1:1 ratio, thus inhibiting FtsZ polymerization and therefore preventing it from participating in the assembly of the Z ring. This mechanism prevents the premature segregation of damaged DNA to daughter cells during cell division. The protein is Cell division inhibitor SulA of Salmonella choleraesuis (strain SC-B67).